The chain runs to 230 residues: NNFFQGYNLLFQHSLFASYMDWFHAFNCSLLLGVLVFVTLLFGYLIFSTFYFKSKKIEYQFGELLCSIFPTIILLMQMVPSLSLLYYYGLMNLDSNLTVKVTGHQWYWSYEYSDIPGLEFDSYMKSLDQLNLGEPRLLEVDNRCVIPCDTNIRFCITSADVIHAWALNSLSVKLDAMSGILSTFSYSFPMVGVFYGQCSEICGANHSFMPIALEVTLLDNFKSWCFGTME.

The Mitochondrial intermembrane portion of the chain corresponds to 1–29; sequence NNFFQGYNLLFQHSLFASYMDWFHAFNCS. A helical transmembrane segment spans residues 30–50; the sequence is LLLGVLVFVTLLFGYLIFSTF. Over 51–63 the chain is Mitochondrial matrix; sequence YFKSKKIEYQFGE. Residues 64–84 form a helical membrane-spanning segment; the sequence is LLCSIFPTIILLMQMVPSLSL. At 85 to 230 the chain is on the mitochondrial intermembrane side; that stretch reads LYYYGLMNLD…FKSWCFGTME (146 aa). His-163, Cys-198, Glu-200, Cys-202, His-206, and Met-209 together coordinate Cu cation. Residue Glu-200 participates in Mg(2+) binding.

It belongs to the cytochrome c oxidase subunit 2 family. In terms of assembly, component of the cytochrome c oxidase (complex IV, CIV), a multisubunit enzyme composed of a catalytic core of 3 subunits and several supernumerary subunits. The complex exists as a monomer or a dimer and forms supercomplexes (SCs) in the inner mitochondrial membrane with ubiquinol-cytochrome c oxidoreductase (cytochrome b-c1 complex, complex III, CIII). It depends on Cu cation as a cofactor.

The protein localises to the mitochondrion inner membrane. It carries out the reaction 4 Fe(II)-[cytochrome c] + O2 + 8 H(+)(in) = 4 Fe(III)-[cytochrome c] + 2 H2O + 4 H(+)(out). Its function is as follows. Component of the cytochrome c oxidase, the last enzyme in the mitochondrial electron transport chain which drives oxidative phosphorylation. The respiratory chain contains 3 multisubunit complexes succinate dehydrogenase (complex II, CII), ubiquinol-cytochrome c oxidoreductase (cytochrome b-c1 complex, complex III, CIII) and cytochrome c oxidase (complex IV, CIV), that cooperate to transfer electrons derived from NADH and succinate to molecular oxygen, creating an electrochemical gradient over the inner membrane that drives transmembrane transport and the ATP synthase. Cytochrome c oxidase is the component of the respiratory chain that catalyzes the reduction of oxygen to water. Electrons originating from reduced cytochrome c in the intermembrane space (IMS) are transferred via the dinuclear copper A center (CU(A)) of subunit 2 and heme A of subunit 1 to the active site in subunit 1, a binuclear center (BNC) formed by heme A3 and copper B (CU(B)). The BNC reduces molecular oxygen to 2 water molecules using 4 electrons from cytochrome c in the IMS and 4 protons from the mitochondrial matrix. The polypeptide is Cytochrome c oxidase subunit 2 (cox-2) (Caenorhabditis remanei (Caenorhabditis vulgaris)).